Reading from the N-terminus, the 284-residue chain is Tropomyosin (284 aa).

A coiled-coil region spans residues methionine 1–glutamate 273.

The protein belongs to the tropomyosin family. As to quaternary structure, homodimer. Ubiquitous, but especially prevalent in the anterior muscle bundles associated with legs. Expression in the mid and posterior regions is probably related to the numerous, small muscle bundles associated with the digestive and reproductive systems (at protein level).

Functionally, tropomyosin, in association with the troponin complex, plays a central role in the calcium dependent regulation of muscle contraction. The polypeptide is Tropomyosin (Psoroptes ovis (Sheep scab mite)).